Reading from the N-terminus, the 281-residue chain is Pantothenate synthetase (281 aa).

Residue 29–36 (MGYLHEGH) coordinates ATP. His36 functions as the Proton donor in the catalytic mechanism. Gln60 contacts (R)-pantoate. Gln60 serves as a coordination point for beta-alanine. ATP is bound at residue 146–149 (GQKD). Gln152 is a binding site for (R)-pantoate. Residues Val175 and 183 to 186 (MSSR) contribute to the ATP site.

This sequence belongs to the pantothenate synthetase family. Homodimer.

It is found in the cytoplasm. It carries out the reaction (R)-pantoate + beta-alanine + ATP = (R)-pantothenate + AMP + diphosphate + H(+). It participates in cofactor biosynthesis; (R)-pantothenate biosynthesis; (R)-pantothenate from (R)-pantoate and beta-alanine: step 1/1. Catalyzes the condensation of pantoate with beta-alanine in an ATP-dependent reaction via a pantoyl-adenylate intermediate. The protein is Pantothenate synthetase of Pseudothermotoga lettingae (strain ATCC BAA-301 / DSM 14385 / NBRC 107922 / TMO) (Thermotoga lettingae).